The chain runs to 195 residues: Recombination protein RecR (195 aa).

The C4-type zinc finger occupies 53–68; sequence CTICHNLDTISPCSIC. Residues 76-171 enclose the Toprim domain; sequence SIICVVEELG…KVTRLACGIP (96 aa).

It belongs to the RecR family.

May play a role in DNA repair. It seems to be involved in an RecBC-independent recombinational process of DNA repair. It may act with RecF and RecO. In Anaplasma marginale (strain St. Maries), this protein is Recombination protein RecR.